Consider the following 673-residue polypeptide: MDLTKMGMIQLQNPSHPTGLLCKANQMRLAGTLCDVVIMVDSQEFHAHRTVLACTSKMFEILFHRNSQHYTLDFLSPKTFQQILEYAYTATLQAKAEDLDDLLYAAEILEIEYLEEQCLKMLETIQASDDNDTEATMADGGAEEEEDRKARYLKNIFISKHSSEESGYASVAGQSLPGPMVDQSPSVSTSFGLSAMSPTKAAVDSLMTIGQSLLQGTLQPPAGPEEPTLAGGGRHPGVAEVKTEMMQVDEVPSQDSPGAAESSISGGMGDKVEERGKEGPGTPTRSSVITSARELHYGREESAEQVPPPAEAGQAPTGRPEHPAPPPEKHLGIYSVLPNHKADAVLSMPSSVTSGLHVQPALAVSMDFSTYGGLLPQGFIQRELFSKLGELAVGMKSESRTIGEQCSVCGVELPDNEAVEQHRKLHSGMKTYGCELCGKRFLDSLRLRMHLLAHSAGAKAFVCDQCGAQFSKEDALETHRQTHTGTDMAVFCLLCGKRFQAQSALQQHMEVHAGVRSYICSECNRTFPSHTALKRHLRSHTGDHPYECEFCGSCFRDESTLKSHKRIHTGEKPYECNGCGKKFSLKHQLETHYRVHTGEKPFECKLCHQRSRDYSAMIKHLRTHNGASPYQCTICTEYCPSLSSMQKHMKGHKPEEIPPDWRIEKTYLYLCYV.

The BTB domain maps to 34–96 (CDVVIMVDSQ…AYTATLQAKA (63 aa)). Phosphoserine; by PDPK1 occurs at positions 76, 184, and 197. The interval 200 to 300 (KAAVDSLMTI…SARELHYGRE (101 aa)) is interaction with RUNX1T1. Disordered stretches follow at residues 215–236 (QGTLQPPAGPEEPTLAGGGRHP) and 249–332 (DEVP…KHLG). A Phosphoserine; by PDPK1 modification is found at Ser-256. Residue Thr-282 is modified to Phosphothreonine; by PDPK1. Composition is skewed to basic and acidic residues over residues 293 to 302 (RELHYGREES) and 319 to 331 (RPEHPAPPPEKHL). 8 consecutive C2H2-type zinc fingers follow at residues 404–426 (EQCSVCGVELPDNEAVEQHRKLH), 432–454 (YGCELCGKRFLDSLRLRMHLLAH), 461–483 (FVCDQCGAQFSKEDALETHRQTH), 490–512 (VFCLLCGKRFQAQSALQQHMEVH), 518–540 (YICSECNRTFPSHTALKRHLRSH), 546–568 (YECEFCGSCFRDESTLKSHKRIH), 574–596 (YECNGCGKKFSLKHQLETHYRVH), and 602–624 (FECKLCHQRSRDYSAMIKHLRTH). Ser-628 bears the Phosphoserine; by PDPK1 mark. The C2H2-type 9 zinc finger occupies 630-652 (YQCTICTEYCPSLSSMQKHMKGH).

Belongs to the krueppel C2H2-type zinc-finger protein family. Binds EPN1. Interacts with ZBTB32 and CUL3. Interacts with ATP7B. Interacts with transcriptional corepressor RUNX1T1 (via its N-terminus); the interaction increases the transcription repression activity of ZBTB16. Interacts (via C2H2-type zinc finger domains 1 and 2) with RNF112. Within the hematopoietic system, PLZF is expressed in bone marrow, early myeloid cell lines and peripheral blood mononuclear cells. Also expressed in the ovary, and at lower levels, in the kidney and lung.

The protein resides in the nucleus. It is found in the nuclear body. Its pathway is protein modification; protein ubiquitination. Functionally, acts as a transcriptional repressor. Transcriptional repression may be mediated through recruitment of histone deacetylases to target promoters. May play a role in myeloid maturation and in the development and/or maintenance of other differentiated tissues. Probable substrate-recognition component of an E3 ubiquitin-protein ligase complex which mediates the ubiquitination and subsequent proteasomal degradation of target proteins. The sequence is that of Zinc finger and BTB domain-containing protein 16 (ZBTB16) from Homo sapiens (Human).